A 456-amino-acid chain; its full sequence is Probable multidrug resistance protein NorM (456 aa).

The next 12 membrane-spanning stretches (helical) occupy residues 13-34 (QFLT…MTFF), 54-76 (SSFW…PIIA), 95-117 (LYIA…PTIL), 132-154 (HFLN…RSFI), 161-183 (RVTM…CFIF), 193-215 (GAGS…VILI), 244-266 (IGVP…TILM), 286-308 (LLYA…ETGA), 321-343 (GMAA…RDII), 358-380 (MHFL…VLGA), 387-409 (VTVT…GYGL), and 414-436 (LGPF…ILSI).

Belongs to the multi antimicrobial extrusion (MATE) (TC 2.A.66.1) family.

The protein resides in the cell membrane. Its function is as follows. Multidrug efflux pump. This chain is Probable multidrug resistance protein NorM (norM), found in Listeria monocytogenes serotype 4b (strain F2365).